Here is a 242-residue protein sequence, read N- to C-terminus: Biosynthetic peptidoglycan transglycosylase (242 aa).

The helical transmembrane segment at Leu19–Val39 threads the bilayer.

The protein belongs to the glycosyltransferase 51 family.

The protein resides in the cell inner membrane. The catalysed reaction is [GlcNAc-(1-&gt;4)-Mur2Ac(oyl-L-Ala-gamma-D-Glu-L-Lys-D-Ala-D-Ala)](n)-di-trans,octa-cis-undecaprenyl diphosphate + beta-D-GlcNAc-(1-&gt;4)-Mur2Ac(oyl-L-Ala-gamma-D-Glu-L-Lys-D-Ala-D-Ala)-di-trans,octa-cis-undecaprenyl diphosphate = [GlcNAc-(1-&gt;4)-Mur2Ac(oyl-L-Ala-gamma-D-Glu-L-Lys-D-Ala-D-Ala)](n+1)-di-trans,octa-cis-undecaprenyl diphosphate + di-trans,octa-cis-undecaprenyl diphosphate + H(+). It participates in cell wall biogenesis; peptidoglycan biosynthesis. Peptidoglycan polymerase that catalyzes glycan chain elongation from lipid-linked precursors. The protein is Biosynthetic peptidoglycan transglycosylase of Escherichia coli O127:H6 (strain E2348/69 / EPEC).